Reading from the N-terminus, the 451-residue chain is Phosphoglucosamine mutase (451 aa).

Serine 102 (phosphoserine intermediate) is an active-site residue. Residues serine 102, aspartate 242, aspartate 244, and aspartate 246 each coordinate Mg(2+). Position 102 is a phosphoserine (serine 102).

Belongs to the phosphohexose mutase family. Requires Mg(2+) as cofactor. In terms of processing, activated by phosphorylation.

The catalysed reaction is alpha-D-glucosamine 1-phosphate = D-glucosamine 6-phosphate. Catalyzes the conversion of glucosamine-6-phosphate to glucosamine-1-phosphate. This Staphylococcus aureus (strain bovine RF122 / ET3-1) protein is Phosphoglucosamine mutase.